Reading from the N-terminus, the 317-residue chain is Probable F-box protein At2g36090 (317 aa).

The F-box domain maps to 25–74 (IESHILTRLDGATLASVSCASSHLHHLASNEILWSKICRSTWPSCSGGSR).

This is Probable F-box protein At2g36090 from Arabidopsis thaliana (Mouse-ear cress).